A 287-amino-acid chain; its full sequence is MEMO1 family protein MJ0403 (287 aa).

It belongs to the MEMO1 family.

The chain is MEMO1 family protein MJ0403 from Methanocaldococcus jannaschii (strain ATCC 43067 / DSM 2661 / JAL-1 / JCM 10045 / NBRC 100440) (Methanococcus jannaschii).